Reading from the N-terminus, the 338-residue chain is MVVKVGINGFGRIGRIVFRNAIEHDDIQIVAVNDPFIEPKYAEYMLRYDSTHGNFKGTIAVEGSDLVVNGKKVKFYTERDPSAIPWSETGADYIVESTGVFTTTEKASAHLKGGAKKVIISAPSADAPMYVMGVNNESYDGSANVISNASCTTNCLAPLAKVIHDNFTIVEGLMTTVHSYTATQKTVDGPSSKDWRGGRTAAQNIIPSSTGAAKAVGKVIPDLNGKLTGMSMRVPTANVSVVDLTVRIEKGASYDEIKEVVKKASEGPLAGILAYTEDEVVSSDMNGNPASSIFDAKAGISLNKNFVKLVSWYDNEWGYSRRVLDLISYVAKVDASKA.

NAD(+)-binding positions include 12-13 (RI), D34, and R79. D-glyceraldehyde 3-phosphate is bound by residues 150-152 (SCT), T181, 210-211 (TG), and R233. The active-site Nucleophile is the C151. N315 contributes to the NAD(+) binding site.

Belongs to the glyceraldehyde-3-phosphate dehydrogenase family. In terms of assembly, homotetramer.

It localises to the cytoplasm. The catalysed reaction is D-glyceraldehyde 3-phosphate + phosphate + NAD(+) = (2R)-3-phospho-glyceroyl phosphate + NADH + H(+). Its pathway is carbohydrate degradation; glycolysis; pyruvate from D-glyceraldehyde 3-phosphate: step 1/5. This is Glyceraldehyde-3-phosphate dehydrogenase (GPD) from Sordaria macrospora.